The chain runs to 151 residues: Lipoprotein signal peptidase (151 aa).

Transmembrane regions (helical) follow at residues 61–81 (GSQW…IWIG) and 88–107 (SRWQ…GNGI). Catalysis depends on residues Asp117 and Asp133. Residues 128–148 (VFNLADVAINLAVLCLLIEAI) form a helical membrane-spanning segment.

This sequence belongs to the peptidase A8 family.

It is found in the cell inner membrane. It carries out the reaction Release of signal peptides from bacterial membrane prolipoproteins. Hydrolyzes -Xaa-Yaa-Zaa-|-(S,diacylglyceryl)Cys-, in which Xaa is hydrophobic (preferably Leu), and Yaa (Ala or Ser) and Zaa (Gly or Ala) have small, neutral side chains.. The protein operates within protein modification; lipoprotein biosynthesis (signal peptide cleavage). Its function is as follows. This protein specifically catalyzes the removal of signal peptides from prolipoproteins. This Synechococcus sp. (strain RCC307) protein is Lipoprotein signal peptidase.